The following is a 368-amino-acid chain: Histidinol-phosphate aminotransferase (368 aa).

Lysine 215 bears the N6-(pyridoxal phosphate)lysine mark.

It belongs to the class-II pyridoxal-phosphate-dependent aminotransferase family. Histidinol-phosphate aminotransferase subfamily. In terms of assembly, homodimer. Pyridoxal 5'-phosphate is required as a cofactor.

It carries out the reaction L-histidinol phosphate + 2-oxoglutarate = 3-(imidazol-4-yl)-2-oxopropyl phosphate + L-glutamate. It participates in amino-acid biosynthesis; L-histidine biosynthesis; L-histidine from 5-phospho-alpha-D-ribose 1-diphosphate: step 7/9. This is Histidinol-phosphate aminotransferase (hisC) from Buchnera aphidicola subsp. Acyrthosiphon pisum (strain APS) (Acyrthosiphon pisum symbiotic bacterium).